The chain runs to 307 residues: N-acetylmuramic acid 6-phosphate etherase (307 aa).

Positions 59 to 222 (TADRLRQGGR…STGVMVKLGK (164 aa)) constitute an SIS domain. Residue E87 is the Proton donor of the active site. E118 is an active-site residue.

This sequence belongs to the GCKR-like family. MurNAc-6-P etherase subfamily. In terms of assembly, homodimer.

It carries out the reaction N-acetyl-D-muramate 6-phosphate + H2O = N-acetyl-D-glucosamine 6-phosphate + (R)-lactate. Its pathway is amino-sugar metabolism; N-acetylmuramate degradation. Functionally, specifically catalyzes the cleavage of the D-lactyl ether substituent of MurNAc 6-phosphate, producing GlcNAc 6-phosphate and D-lactate. The polypeptide is N-acetylmuramic acid 6-phosphate etherase (Trichormus variabilis (strain ATCC 29413 / PCC 7937) (Anabaena variabilis)).